A 493-amino-acid chain; its full sequence is Transmembrane protein 145 (493 aa).

The chain crosses the membrane as a helical span at residues 9 to 29 (LRRLLPPLLLLLLSLPPRARA). A glycan (N-linked (GlcNAc...) asparagine) is linked at asparagine 35. 7 helical membrane-spanning segments follow: residues 175–195 (VTFL…GYLL), 207–227 (MFMA…IYWG), 241–261 (ILAK…LILL), 282–302 (VYMT…AEFF), 318–338 (GLIG…LVSL), 349–369 (VPFF…ALIA), and 381–401 (IVNG…LIMT). Asparagine 444 carries N-linked (GlcNAc...) asparagine glycosylation. The disordered stretch occupies residues 464-493 (PATSPLPRAAPDSGLPLFRDLRPPGPLRDL).

The protein localises to the membrane. This chain is Transmembrane protein 145 (TMEM145), found in Homo sapiens (Human).